A 405-amino-acid chain; its full sequence is Cytoplasmic tRNA 2-thiolation protein 2 (405 aa).

It belongs to the CTU2/NCS2 family.

It is found in the cytoplasm. The protein operates within tRNA modification; 5-methoxycarbonylmethyl-2-thiouridine-tRNA biosynthesis. Functionally, plays a central role in 2-thiolation of mcm(5)S(2)U at tRNA wobble positions of tRNA(Lys), tRNA(Glu) and tRNA(Gln). May act by forming a heterodimer with NCS6/CTU1 that ligates sulfur from thiocarboxylated URM1 onto the uridine of tRNAs at wobble position. In Drosophila melanogaster (Fruit fly), this protein is Cytoplasmic tRNA 2-thiolation protein 2.